A 235-amino-acid polypeptide reads, in one-letter code: MTTDAPQKAVVLFSGGLDSTTCLAVARRDGFLPCALSFEYGQRHKVELEAARRVAKAMAVTTHLILPLPLGSIGGSALTADIDVPKDRDIGEMEADIPVTYVPARNTIFLSMALGWAEVLGASDIYIGVNALDYSGYPDCRPEFIAAFEAMANLAVKEAVEGRLAIRIHTPLLHLSKAGIVELGTSLGVDYGLTHSCYDPAPDGLACGRCDSCLLRRKGFEEAGVADPTRYRPSL.

13 to 23 (FSGGLDSTTCL) provides a ligand contact to ATP. 4 residues coordinate Zn(2+): C197, C207, C210, and C213.

This sequence belongs to the QueC family. Zn(2+) is required as a cofactor.

It catalyses the reaction 7-carboxy-7-deazaguanine + NH4(+) + ATP = 7-cyano-7-deazaguanine + ADP + phosphate + H2O + H(+). The protein operates within purine metabolism; 7-cyano-7-deazaguanine biosynthesis. Its function is as follows. Catalyzes the ATP-dependent conversion of 7-carboxy-7-deazaguanine (CDG) to 7-cyano-7-deazaguanine (preQ(0)). The protein is 7-cyano-7-deazaguanine synthase of Solidesulfovibrio magneticus (strain ATCC 700980 / DSM 13731 / RS-1) (Desulfovibrio magneticus).